Consider the following 103-residue polypeptide: Small ribosomal subunit protein uS10 (103 aa).

Belongs to the universal ribosomal protein uS10 family. In terms of assembly, part of the 30S ribosomal subunit.

Functionally, involved in the binding of tRNA to the ribosomes. This Xanthomonas campestris pv. campestris (strain B100) protein is Small ribosomal subunit protein uS10.